The sequence spans 150 residues: Large ribosomal subunit protein bL9 (150 aa).

This sequence belongs to the bacterial ribosomal protein bL9 family.

Binds to the 23S rRNA. The sequence is that of Large ribosomal subunit protein bL9 from Ralstonia pickettii (strain 12J).